A 316-amino-acid polypeptide reads, in one-letter code: UDP-N-acetylenolpyruvoylglucosamine reductase (316 aa).

In terms of domain architecture, FAD-binding PCMH-type spans V27–K225. R190 is a catalytic residue. Catalysis depends on S239, which acts as the Proton donor. E309 is a catalytic residue.

The protein belongs to the MurB family. FAD is required as a cofactor.

It is found in the cytoplasm. The enzyme catalyses UDP-N-acetyl-alpha-D-muramate + NADP(+) = UDP-N-acetyl-3-O-(1-carboxyvinyl)-alpha-D-glucosamine + NADPH + H(+). Its pathway is cell wall biogenesis; peptidoglycan biosynthesis. Cell wall formation. The chain is UDP-N-acetylenolpyruvoylglucosamine reductase from Coxiella burnetii (strain CbuG_Q212) (Coxiella burnetii (strain Q212)).